Here is a 570-residue protein sequence, read N- to C-terminus: Ferroportin (570 aa).

Residues 1–23 lie on the Cytoplasmic side of the membrane; it reads MTKSRDQTHQEGCCGSLANYLTS. Residues 24-53 traverse the membrane as a helical segment; sequence AKFLLYLGHSLSTWGDRMWHFAVSVFLVEL. Residues D39 and H43 each coordinate Fe cation. The Extracellular portion of the chain corresponds to 54-57; sequence YGNS. The helical transmembrane segment at 58–84 threads the bilayer; that stretch reads LLLTAVYGLVVAGSVLVLGAIIGDWVD. Residues 85–87 are Cytoplasmic-facing; that stretch reads KNA. The helical transmembrane segment at 88–118 threads the bilayer; the sequence is RLKVAQTSLVVQNVSVILCGIILMMVFLHKN. At 119-126 the chain is on the extracellular side; the sequence is ELLNMYHG. Residues 127–162 form a helical membrane-spanning segment; it reads WVLTVCYILIITIANIANLASTATAITIQRDWIVVV. At 163-164 the chain is on the cytoplasmic side; that stretch reads AG. A helical membrane pass occupies residues 165–195; it reads ENRSRLADMNATIRRIDQLTNILAPMAVGQI. Over 196 to 202 the chain is Extracellular; sequence MTFGSPV. Residues 203-229 form a helical membrane-spanning segment; that stretch reads IGCGFISGWNLVSMCVEYFLLWKVYQK. Residues 230–306 are Cytoplasmic-facing; sequence TPALAVKAAL…DGWVSYYNQP (77 aa). A helical transmembrane segment spans residues 307-333; it reads VFLAGMGLAFLYMTVLGFDCITTGYAY. C326 is a Fe cation binding site. Over 334–338 the chain is Extracellular; that stretch reads TQGLS. A helical membrane pass occupies residues 339–366; sequence GSILSVLMGASAITGIMGTVAFTWLRRK. The Cytoplasmic segment spans residues 367-368; it reads CG. Residues 369–391 form a helical membrane-spanning segment; that stretch reads LVRTGLFSGLAQLSCLILCVISV. Residues 392–452 lie on the Extracellular side of the membrane; it reads FMPGSPLDLS…EMSTKSVPII (61 aa). The chain crosses the membrane as a helical span at residues 453–482; that stretch reads SVSLLFAGVIAARIGLWSFDLTVTQLLQEN. At 483 to 487 the chain is on the cytoplasmic side; sequence VIESE. A helical membrane pass occupies residues 488–512; that stretch reads RGIINGVQNSMNYLLDLLHFIMVIL. Position 506 (H506) interacts with Fe cation. Residues 513–515 are Extracellular-facing; that stretch reads APN. The helical transmembrane segment at 516-541 threads the bilayer; it reads PEAFGLLVLISVSFVAMGHLMYFRFA. Topologically, residues 542–570 are cytoplasmic; that stretch reads QKTLGNQIFVCAPDEKEVTDESQPNTSVV.

This sequence belongs to the ferroportin (FP) (TC 2.A.100) family. SLC40A subfamily. As to quaternary structure, identified in a complex with STOM. Interacts with HAMP; affinity of the peptide hormone HAMP for SLC40A1 increases by 80-fold in the presence of iron and the interaction promotes SLC40A1 ubiquitination and degradation. Part of a complex composed of SLC40A1/ferroportin, TF/transferrin and HEPH/hephaestin that transfers iron from cells to transferrin. Polyubiquitinated by RNF217; leading to proteasomal degradation. Under conditions of high systemic iron levels, both the hormone peptide hepcidin/HAMP and holo(iron bound)-transferrin/TF induce the ubiquitination, internalization and proteasomal degradation of SLC40A1 to control iron release from cells.

Its subcellular location is the cell membrane. The protein localises to the basolateral cell membrane. It carries out the reaction Fe(2+)(in) = Fe(2+)(out). With respect to regulation, during elevated serum iron levels, liver-derived hepcidin/HAMP negatively regulates cell surface SLC40A1 by inducing its ubiquitination, internalization, and degradation. Indeed, hepcidin/HAMP affinity towards ferroportin/SLC40A1 increases by 80-fold in the presence of iron. In terms of biological role, transports Fe(2+) from the inside of a cell to the outside of the cell, playing a key role for maintaining systemic iron homeostasis. Transports iron from intestinal, splenic, hepatic cells, macrophages and erythrocytes into the blood to provide iron to other tissues. Controls therefore dietary iron uptake, iron recycling by macrophages and erythrocytes, and release of iron stores in hepatocytes. When iron is in excess in serum, circulating HAMP/hepcidin levels increase resulting in a degradation of SLC40A1, thus limiting the iron efflux to plasma. This is Ferroportin from Rattus norvegicus (Rat).